The following is a 236-amino-acid chain: Purine nucleoside phosphorylase DeoD-type (236 aa).

Histidine 4 lines the a purine D-ribonucleoside pocket. Residues glycine 20, arginine 24, arginine 43, and 87–90 (RVGS) contribute to the phosphate site. A purine D-ribonucleoside-binding positions include 179 to 181 (EME) and 203 to 204 (SD). Aspartate 204 (proton donor) is an active-site residue.

It belongs to the PNP/UDP phosphorylase family. As to quaternary structure, homohexamer; trimer of homodimers.

The enzyme catalyses a purine D-ribonucleoside + phosphate = a purine nucleobase + alpha-D-ribose 1-phosphate. It catalyses the reaction a purine 2'-deoxy-D-ribonucleoside + phosphate = a purine nucleobase + 2-deoxy-alpha-D-ribose 1-phosphate. Its function is as follows. Catalyzes the reversible phosphorolytic breakdown of the N-glycosidic bond in the beta-(deoxy)ribonucleoside molecules, with the formation of the corresponding free purine bases and pentose-1-phosphate. The protein is Purine nucleoside phosphorylase DeoD-type of Limosilactobacillus reuteri (strain DSM 20016) (Lactobacillus reuteri).